A 178-amino-acid polypeptide reads, in one-letter code: 5,6,7,8-tetrahydromethanopterin hydro-lyase (178 aa).

His33 (proton donor) is an active-site residue. The substrate site is built by Asp35, Leu64, Lys82, Thr84, and Gln99.

It belongs to the formaldehyde-activating enzyme family.

Its subcellular location is the cytoplasm. It catalyses the reaction 5,6,7,8-tetrahydromethanopterin + formaldehyde = 5,10-methylenetetrahydromethanopterin + H2O. Its function is as follows. Catalyzes the condensation of formaldehyde with tetrahydromethanopterin (H(4)MPT) to 5,10-methylenetetrahydromethanopterin. This is 5,6,7,8-tetrahydromethanopterin hydro-lyase (faeA) from Methanosarcina barkeri (strain Fusaro / DSM 804).